A 1082-amino-acid chain; its full sequence is Error-prone DNA polymerase (1082 aa).

This sequence belongs to the DNA polymerase type-C family. DnaE2 subfamily.

It localises to the cytoplasm. The enzyme catalyses DNA(n) + a 2'-deoxyribonucleoside 5'-triphosphate = DNA(n+1) + diphosphate. Its function is as follows. DNA polymerase involved in damage-induced mutagenesis and translesion synthesis (TLS). It is not the major replicative DNA polymerase. This is Error-prone DNA polymerase from Xanthomonas campestris pv. campestris (strain B100).